Reading from the N-terminus, the 879-residue chain is Band 4.1-like protein 1 (879 aa).

A disordered region spans residues methionine 1–glutamate 64. A compositionally biased stretch (low complexity) spans glutamate 17–alanine 35. Position 30 is a phosphothreonine (threonine 30). Positions serine 38 to threonine 50 are enriched in basic and acidic residues. Serine 75 bears the Phosphoserine mark. The residue at position 79 (threonine 79) is a Phosphothreonine. The FERM domain occupies alanine 97–serine 378. The residue at position 343 (tyrosine 343) is a Phosphotyrosine. Phosphoserine occurs at positions 378, 430, 437, 461, and 466. Positions serine 428 to glutamate 501 are disordered. A compositionally biased stretch (basic and acidic residues) spans glutamate 444 to glutamate 501. Phosphothreonine is present on threonine 475. Positions lysine 483–serine 541 are spectrin--actin-binding. Serine 510 bears the Phosphoserine mark. The span at leucine 514–leucine 538 shows a compositional bias: basic and acidic residues. Disordered regions lie at residues leucine 514 to aspartate 596, phenylalanine 633 to glutamate 687, and serine 718 to proline 742. Residues serine 540, serine 541, serine 544, and serine 546 each carry the phosphoserine modification. Threonine 550 carries the phosphothreonine modification. The span at threonine 550–glutamate 577 shows a compositional bias: basic and acidic residues. Phosphoserine occurs at positions 564 and 578. A Phosphothreonine modification is found at threonine 580. Glutamate 583, glutamine 587, serine 639, serine 648, serine 650, serine 665, serine 666, aspartate 669, serine 671, serine 677, and serine 684 each carry phosphoserine. The segment covering aspartate 635–serine 650 has biased composition (basic and acidic residues). The residue at position 685 (threonine 685) is a Phosphothreonine. The span at serine 718 to valine 728 shows a compositional bias: polar residues. Serine 721, proline 742, alanine 766, serine 782, and serine 868 each carry phosphoserine. Positions cysteine 744–serine 879 are C-terminal (CTD).

As to quaternary structure, interacts with AGAP2. As to expression, highest expression in brain, lower in heart and kidney. Within the brain, highest expression in cerebellum.

Its subcellular location is the cytoplasm. It localises to the cytoskeleton. In terms of biological role, may function to confer stability and plasticity to neuronal membrane via multiple interactions, including the spectrin-actin-based cytoskeleton, integral membrane channels and membrane-associated guanylate kinases. This is Band 4.1-like protein 1 from Rattus norvegicus (Rat).